Consider the following 1070-residue polypeptide: Carbamoyl phosphate synthase large chain (1070 aa).

The tract at residues 1 to 399 (MPKREDIKKV…SLLKAFKSLD (399 aa)) is carboxyphosphate synthetic domain. Residues arginine 129, arginine 169, glycine 175, glycine 176, glutamate 208, valine 210, glutamate 215, glycine 241, valine 242, histidine 243, glutamine 284, and glutamate 296 each coordinate ATP. Positions 133–325 (KETMLRIGEK…IARVTAKIAI (193 aa)) constitute an ATP-grasp 1 domain. Residues glutamine 284, glutamate 296, and asparagine 298 each contribute to the Mg(2+) site. Positions 284, 296, and 298 each coordinate Mn(2+). The segment at 400-540 (IDSQLGNKRW…YSTYEDTCET (141 aa)) is oligomerization domain. Residues 541–931 (NPTDRKKILI…YKAELAADNL (391 aa)) are carbamoyl phosphate synthetic domain. Residues 672-863 (YVLMQKFGIL…LAKIAARVIA (192 aa)) enclose the ATP-grasp 2 domain. 10 residues coordinate ATP: arginine 708, aspartate 747, leucine 749, glutamate 754, glycine 779, valine 780, histidine 781, serine 782, glutamine 822, and glutamate 834. The Mg(2+) site is built by glutamine 822, glutamate 834, and asparagine 836. Positions 822, 834, and 836 each coordinate Mn(2+). The region spanning 930-1070 (NLLPLTGKVF…INEYHKEMGL (141 aa)) is the MGS-like domain. Positions 932 to 1070 (LPLTGKVFLS…INEYHKEMGL (139 aa)) are allosteric domain.

This sequence belongs to the CarB family. In terms of assembly, composed of two chains; the small (or glutamine) chain promotes the hydrolysis of glutamine to ammonia, which is used by the large (or ammonia) chain to synthesize carbamoyl phosphate. Tetramer of heterodimers (alpha,beta)4. The cofactor is Mg(2+). Mn(2+) is required as a cofactor.

It carries out the reaction hydrogencarbonate + L-glutamine + 2 ATP + H2O = carbamoyl phosphate + L-glutamate + 2 ADP + phosphate + 2 H(+). The catalysed reaction is hydrogencarbonate + NH4(+) + 2 ATP = carbamoyl phosphate + 2 ADP + phosphate + 2 H(+). It functions in the pathway amino-acid biosynthesis; L-arginine biosynthesis; carbamoyl phosphate from bicarbonate: step 1/1. It participates in pyrimidine metabolism; UMP biosynthesis via de novo pathway; (S)-dihydroorotate from bicarbonate: step 1/3. In terms of biological role, large subunit of the glutamine-dependent carbamoyl phosphate synthetase (CPSase). CPSase catalyzes the formation of carbamoyl phosphate from the ammonia moiety of glutamine, carbonate, and phosphate donated by ATP, constituting the first step of 2 biosynthetic pathways, one leading to arginine and/or urea and the other to pyrimidine nucleotides. The large subunit (synthetase) binds the substrates ammonia (free or transferred from glutamine from the small subunit), hydrogencarbonate and ATP and carries out an ATP-coupled ligase reaction, activating hydrogencarbonate by forming carboxy phosphate which reacts with ammonia to form carbamoyl phosphate. This Methanosarcina acetivorans (strain ATCC 35395 / DSM 2834 / JCM 12185 / C2A) protein is Carbamoyl phosphate synthase large chain.